A 471-amino-acid polypeptide reads, in one-letter code: Collagen alpha-3(IV) chain (471 aa).

The interval 1 to 238 (GLPGRKGPVG…KGKPGDTGPP (238 aa)) is triple-helical region. The tract at residues 1–241 (GLPGRKGPVG…PGDTGPPAAG (241 aa)) is disordered. Pro residues predominate over residues 52-61 (MPGPPGPPGS). Residues 106–108 (RGD) carry the Cell attachment site motif. The segment covering 127 to 141 (PGPPGPPGQSGPKGP) has biased composition (pro residues). Positions 165–174 (SAGEPGMQGE) are enriched in low complexity. Over residues 175–187 (PGPPGPPGDPGPC) the composition is skewed to pro residues. A hydroxyproline mark is found at Pro232 and Pro238. The Collagen IV NC1 domain occupies 246-470 (GFVFTRHSQT…SRCQVCMKMR (225 aa)). 6 disulfides stabilise this stretch: Cys261/Cys352, Cys294/Cys349, Cys306/Cys312, Cys371/Cys466, Cys405/Cys463, and Cys417/Cys423. Met334 is covalently cross-linked (S-Lysyl-methionine sulfilimine (Met-Lys) (interchain with K-452)). Lys452 is covalently cross-linked (S-Lysyl-methionine sulfilimine (Lys-Met) (interchain with M-334)).

It belongs to the type IV collagen family. As to quaternary structure, there are six type IV collagen isoforms, alpha 1(IV)-alpha 6(IV), each of which can form a triple helix structure with 2 other chains to generate type IV collagen network. The alpha 3(IV) chain forms a triple helical protomer with alpha 4(IV) and alpha 5(IV); this triple helical structure dimerizes through NC1-NC1 domain interactions such that the alpha 3(IV), alpha 4(IV) and alpha 5(IV) chains of one protomer connect with the alpha 5(IV), alpha 4(IV) and alpha 3(IV) chains of the opposite promoter, respectively. Interacts with ITGB3. Associates with LAMB2 at the neuromuscular junction and in GBM. Prolines at the third position of the tripeptide repeating unit (G-X-Y) are hydroxylated in some or all of the chains. Post-translationally, type IV collagens contain numerous cysteine residues which are involved in inter- and intramolecular disulfide bonding. 12 of these, located in the NC1 domain, are conserved in all known type IV collagens. In terms of processing, the trimeric structure of the NC1 domains is stabilized by covalent bonds between Lys and Met residues. Phosphorylated. Thought to be phosphorylated by CERT, but CERT does not have kinase activity.

Its subcellular location is the secreted. It is found in the extracellular space. The protein resides in the extracellular matrix. The protein localises to the basement membrane. Type IV collagen is the major structural component of glomerular basement membranes (GBM), forming a 'chicken-wire' meshwork together with laminins, proteoglycans and entactin/nidogen. This Bos taurus (Bovine) protein is Collagen alpha-3(IV) chain (COL4A3).